The chain runs to 100 residues: uncharacterized protein (100 aa).

It localises to the mitochondrion. This is an uncharacterized protein from Arabidopsis thaliana (Mouse-ear cress).